A 196-amino-acid chain; its full sequence is Protein TEX261 (196 aa).

Helical transmembrane passes span 3 to 23 (FMYLLSWLSLFIQVAFITLAV), 42 to 62 (SRIIKYMIWFSTAVLIGLYVF), 70 to 90 (IGVGLFTNLVYFGLLQTFPFI), 97 to 117 (FILSCGLVVVNHYLAFQFFAE), and 125 to 145 (VLAYFTFCLWIIPFAFFVSLS).

It belongs to the SVP26 family.

The protein localises to the membrane. The polypeptide is Protein TEX261 (TEX261) (Homo sapiens (Human)).